An 86-amino-acid polypeptide reads, in one-letter code: Large ribosomal subunit protein bL27 (86 aa).

The segment at 1-21 (MAHKKAAGSSRNGRDSESKRL) is disordered.

Belongs to the bacterial ribosomal protein bL27 family.

This Hahella chejuensis (strain KCTC 2396) protein is Large ribosomal subunit protein bL27.